A 195-amino-acid polypeptide reads, in one-letter code: ATP-dependent Clp protease proteolytic subunit (195 aa).

S98 serves as the catalytic Nucleophile. Residue H123 is part of the active site.

This sequence belongs to the peptidase S14 family. In terms of assembly, fourteen ClpP subunits assemble into 2 heptameric rings which stack back to back to give a disk-like structure with a central cavity, resembling the structure of eukaryotic proteasomes.

The protein localises to the cytoplasm. The enzyme catalyses Hydrolysis of proteins to small peptides in the presence of ATP and magnesium. alpha-casein is the usual test substrate. In the absence of ATP, only oligopeptides shorter than five residues are hydrolyzed (such as succinyl-Leu-Tyr-|-NHMec, and Leu-Tyr-Leu-|-Tyr-Trp, in which cleavage of the -Tyr-|-Leu- and -Tyr-|-Trp bonds also occurs).. Functionally, cleaves peptides in various proteins in a process that requires ATP hydrolysis. Has a chymotrypsin-like activity. Plays a major role in the degradation of misfolded proteins. The protein is ATP-dependent Clp protease proteolytic subunit of Sulfurovum sp. (strain NBC37-1).